A 354-amino-acid polypeptide reads, in one-letter code: Short-chain dehydrogenase/reductase SAT2 (354 aa).

Positions 31, 85, 201, and 233 each coordinate NADP(+).

It belongs to the short-chain dehydrogenases/reductases (SDR) family.

The protein operates within mycotoxin biosynthesis. In terms of biological role, short-chain dehydrogenase/reductase; part of the satratoxin SC1 cluster involved in the biosynthesis of satratoxins, trichothecene mycotoxins that are associated with human food poisonings. Satratoxins are suggested to be made by products of multiple gene clusters (SC1, SC2 and SC3) that encode 21 proteins in all, including polyketide synthases, acetyltransferases, and other enzymes expected to modify the trichothecene skeleton. SC1 encodes 10 proteins, SAT1 to SAT10. The largest are SAT8, which encodes a putative polyketide synthase (PKS) with a conventional non-reducing architecture, and SAT10, a putative protein containing four ankyrin repeats and thus may be involved in protein scaffolding. The putative short-chain reductase SAT3 may assist the PKS in some capacity. SAT6 contains a secretory lipase domain and acts probably as a trichothecene esterase. SAT5 encodes a putative acetyltransferase, and so, with SAT6, may affect endogenous protection from toxicity. The probable transcription factor SAT9 may regulate the expression of the SC1 cluster. SC2 encodes proteins SAT11 to SAT16, the largest of which encodes the putative reducing PKS SAT13. SAT11 is a cytochrome P450 monooxygenase, while SAT14 and SAT16 are probable acetyltransferases. The SC2 cluster may be regulated by the transcription factor SAT15. SC3 is a small cluster that encodes 5 proteins, SAT17 to SAT21. SAT21 is a putative MFS-type transporter which may have a role in exporting secondary metabolites. The four other proteins putatively encoded in SC3 include the taurine hydroxylase-like protein SAT17, the O-methyltransferase SAT18, the acetyltransferase SAT19, and the Cys6-type zinc finger SAT20, the latter being probably involved in regulation of SC3 expression. The chain is Short-chain dehydrogenase/reductase SAT2 from Stachybotrys chartarum (strain CBS 109288 / IBT 7711) (Toxic black mold).